We begin with the raw amino-acid sequence, 248 residues long: Allergin-1 (248 aa).

The first 33 residues, 1–33 (MGDDDTPVCLSVASCKGVSCWLDKLLLWALTLS), serve as a signal peptide directing secretion. The Extracellular portion of the chain corresponds to 34-150 (ITLRNTAVDC…DESCSSCLLS (117 aa)). An Ig-like C2-type domain is found at 54 to 137 (PNLNSSMSVV…SKYSQNFNFT (84 aa)). Asn68 carries N-linked (GlcNAc...) asparagine glycosylation. A disulfide bridge links Cys73 with Cys120. N-linked (GlcNAc...) asparagine glycosylation occurs at Asn135. The helical transmembrane segment at 151–171 (LLLPGVLLGLILPGLAFLIYL) threads the bilayer. The Cytoplasmic portion of the chain corresponds to 172–248 (KYKKGCTGKT…DDYIYSELTY (77 aa)). 2 consecutive short sequence motifs (ITIM motif) follow at residues 216-221 (IHYTTP) and 241-246 (YIYSEL). Tyr218 and Tyr243 each carry phosphotyrosine.

As to quaternary structure, monomer. Interacts (tyrosine-phosphorylated) with PTPN6, PTPN11 and INPP5D. N-glycosylated. As to expression, mast cell-specific. Expressed in primary and transformed mast cells.

It is found in the cell membrane. Functionally, immunoglobulin-like receptor which plays an inhibitory role in degranulation of mast cells. Negatively regulates IgE-mediated mast cell activation and suppresses the type I immediate hypersensitivity reaction. The sequence is that of Allergin-1 (Milr1) from Rattus norvegicus (Rat).